The following is a 348-amino-acid chain: Probable dual-specificity RNA methyltransferase RlmN (348 aa).

Glutamate 95 (proton acceptor) is an active-site residue. The Radical SAM core domain occupies serine 101–aspartate 335. Cysteine 108 and cysteine 340 are disulfide-bonded. [4Fe-4S] cluster-binding residues include cysteine 115, cysteine 119, and cysteine 122. S-adenosyl-L-methionine is bound by residues glycine 162 to glutamate 163, serine 192, serine 221 to histidine 223, and asparagine 297. Catalysis depends on cysteine 340, which acts as the S-methylcysteine intermediate.

It belongs to the radical SAM superfamily. RlmN family. Requires [4Fe-4S] cluster as cofactor.

The protein resides in the cytoplasm. The catalysed reaction is adenosine(2503) in 23S rRNA + 2 reduced [2Fe-2S]-[ferredoxin] + 2 S-adenosyl-L-methionine = 2-methyladenosine(2503) in 23S rRNA + 5'-deoxyadenosine + L-methionine + 2 oxidized [2Fe-2S]-[ferredoxin] + S-adenosyl-L-homocysteine. The enzyme catalyses adenosine(37) in tRNA + 2 reduced [2Fe-2S]-[ferredoxin] + 2 S-adenosyl-L-methionine = 2-methyladenosine(37) in tRNA + 5'-deoxyadenosine + L-methionine + 2 oxidized [2Fe-2S]-[ferredoxin] + S-adenosyl-L-homocysteine. Its function is as follows. Specifically methylates position 2 of adenine 2503 in 23S rRNA and position 2 of adenine 37 in tRNAs. The protein is Probable dual-specificity RNA methyltransferase RlmN of Prochlorococcus marinus (strain SARG / CCMP1375 / SS120).